The primary structure comprises 347 residues: Protein RecA (347 aa).

ATP is bound at residue 67 to 74 (GPESSGKT).

It belongs to the RecA family.

It is found in the cytoplasm. Can catalyze the hydrolysis of ATP in the presence of single-stranded DNA, the ATP-dependent uptake of single-stranded DNA by duplex DNA, and the ATP-dependent hybridization of homologous single-stranded DNAs. It interacts with LexA causing its activation and leading to its autocatalytic cleavage. In Helicobacter pylori (strain Shi470), this protein is Protein RecA.